The chain runs to 141 residues: Lutropin subunit beta (141 aa).

The N-terminal stretch at 1 to 20 (MEMFQGLLLWLLLGVAGVWA) is a signal peptide. 6 disulfide bridges follow: cysteine 29–cysteine 77, cysteine 43–cysteine 92, cysteine 46–cysteine 130, cysteine 54–cysteine 108, cysteine 58–cysteine 110, and cysteine 113–cysteine 120. Asparagine 33 is a glycosylation site (N-linked (GlcNAc...) asparagine).

It belongs to the glycoprotein hormones subunit beta family. In terms of assembly, heterodimer of a common alpha chain and a unique beta chain which confers biological specificity to thyrotropin, lutropin, follitropin and gonadotropin.

The protein localises to the secreted. Functionally, promotes spermatogenesis and ovulation by stimulating the testes and ovaries to synthesize steroids. This chain is Lutropin subunit beta (LHB), found in Bos taurus (Bovine).